A 350-amino-acid polypeptide reads, in one-letter code: GTPase Obg (350 aa).

The region spanning 1-159 (MKLVDEAEIE…RTLKLELKLL (159 aa)) is the Obg domain. The segment at 127 to 147 (NMHFKSSTNRSPRQALPGEPG) is disordered. The region spanning 160-337 (ADVGLLGFPN…IMSRIMAFFD (178 aa)) is the OBG-type G domain. GTP contacts are provided by residues 166-173 (GFPNAGKS), 191-195 (FTTLY), 213-216 (DIPG), 287-290 (NKAD), and 318-320 (SAL). Serine 173 and threonine 193 together coordinate Mg(2+).

The protein belongs to the TRAFAC class OBG-HflX-like GTPase superfamily. OBG GTPase family. Monomer. The cofactor is Mg(2+).

The protein resides in the cytoplasm. Its function is as follows. An essential GTPase which binds GTP, GDP and possibly (p)ppGpp with moderate affinity, with high nucleotide exchange rates and a fairly low GTP hydrolysis rate. Plays a role in control of the cell cycle, stress response, ribosome biogenesis and in those bacteria that undergo differentiation, in morphogenesis control. This is GTPase Obg from Stenotrophomonas maltophilia (strain R551-3).